We begin with the raw amino-acid sequence, 427 residues long: Glucose-1-phosphate adenylyltransferase (427 aa).

Residues Tyr-112, Gly-177, 192-193, and Ser-210 each bind alpha-D-glucose 1-phosphate; that span reads EK.

It belongs to the bacterial/plant glucose-1-phosphate adenylyltransferase family. Homotetramer.

It catalyses the reaction alpha-D-glucose 1-phosphate + ATP + H(+) = ADP-alpha-D-glucose + diphosphate. Its pathway is glycan biosynthesis; glycogen biosynthesis. Its function is as follows. Involved in the biosynthesis of ADP-glucose, a building block required for the elongation reactions to produce glycogen. Catalyzes the reaction between ATP and alpha-D-glucose 1-phosphate (G1P) to produce pyrophosphate and ADP-Glc. This chain is Glucose-1-phosphate adenylyltransferase, found in Methylobacillus flagellatus (strain ATCC 51484 / DSM 6875 / VKM B-1610 / KT).